The sequence spans 183 residues: MLKDIVLVLALQLVYVPILTLRTIFMVKNMSLLAAFMGFLEALIYVFGLSIVFSGKQSYIVMIVYAAGFGARGFLLEDISSKSWAIGYTTVTVNLQQKNQELIHLLRESGYGVTVYTGEGRDSQRYRLDILTKRNREEELLELIERYEPKAFIISYEPRRFKGGFLVASMKKRVKRKKECHES.

Transmembrane regions (helical) follow at residues 5–25, 33–53, and 59–79; these read IVLVLALQLVYVPILTLRTIF, LAAFMGFLEALIYVFGLSIVF, and YIVMIVYAAGFGARGFLLEDI.

Belongs to the UPF0316 family.

The protein localises to the cell membrane. This is UPF0316 protein GTNG_0803 from Geobacillus thermodenitrificans (strain NG80-2).